We begin with the raw amino-acid sequence, 224 residues long: MSASASTAADFVRFALDEGVLRFGSFKVKSGRISPYFFNAGLFNSGRSVGTLAGFYAQALIDSGVAFDMLFGPAYKGIPLATATSVALAGHGAMAGRDVPFAFNRKEAKDHGEGGTLVGAPLTGKVVIIDDVITAGTSVRESVEIIRAAGAEPAAVLIALDRMERAGPDDALSPHSAVQDVARTYGIPVVSIASLADIMTLLQDDAQFAEHRAAVQAYRSKYGV.

5-phospho-alpha-D-ribose 1-diphosphate is bound at residue Lys29. Orotate is bound at residue Phe37 to Phe38. 5-phospho-alpha-D-ribose 1-diphosphate is bound by residues Tyr75–Lys76, Arg105, Lys106, Lys109, His111, and Asp130–Ser138. Residues Thr134 and Arg162 each coordinate orotate.

The protein belongs to the purine/pyrimidine phosphoribosyltransferase family. PyrE subfamily. In terms of assembly, homodimer. It depends on Mg(2+) as a cofactor.

The enzyme catalyses orotidine 5'-phosphate + diphosphate = orotate + 5-phospho-alpha-D-ribose 1-diphosphate. The protein operates within pyrimidine metabolism; UMP biosynthesis via de novo pathway; UMP from orotate: step 1/2. Catalyzes the transfer of a ribosyl phosphate group from 5-phosphoribose 1-diphosphate to orotate, leading to the formation of orotidine monophosphate (OMP). The chain is Orotate phosphoribosyltransferase from Bordetella pertussis (strain Tohama I / ATCC BAA-589 / NCTC 13251).